Consider the following 438-residue polypeptide: Fumarate hydratase class II (438 aa).

Substrate is bound by residues 76 to 78 (SGT), 101 to 104 (HPND), 111 to 113 (SSN), and Thr-159. His-160 functions as the Proton donor/acceptor in the catalytic mechanism. The active site involves Ser-291. Substrate is bound by residues Ser-292 and 297–299 (KTN).

Belongs to the class-II fumarase/aspartase family. Fumarase subfamily. Homotetramer.

It is found in the cytoplasm. The enzyme catalyses (S)-malate = fumarate + H2O. It functions in the pathway carbohydrate metabolism; tricarboxylic acid cycle; (S)-malate from fumarate: step 1/1. Involved in the TCA cycle. Catalyzes the stereospecific interconversion of fumarate to L-malate. In Saccharolobus solfataricus (strain ATCC 35092 / DSM 1617 / JCM 11322 / P2) (Sulfolobus solfataricus), this protein is Fumarate hydratase class II.